A 463-amino-acid chain; its full sequence is MAAQVATTKVPEVRDITRIERIGAHSHIRGLGLDDALEPRQVSQGMVGQLASRRAAGLILEMIKDGQIAGRAVLIAGQPGTGKTAIAMGIAQSLGPDTPFTALAGSEIFSLEMSKTEALSQAFRKAIGVRIKEETEIIEGEVVEIQIDRPATGTGAKVGKLTLKTTEMETIYDLGTKMIESLSKERVQAGDVITIDKATGKISKLGRSFTRARDYDAMGAQTQFVQCPEGELQKRKEVVHTVSLHEIDVINSRTQGFLALFSGDTGEIKSEVREQINAKVSEWREEGKAEIIPGVLFIDEVHMLDIECFSFLNRALESDLSPVLIMATNRGITRIRGTNYQSPHGIPIDMLDRLLIIATTPYTEKETRQILKIRCEEEDVELSEEAHTVLTRIGQETSLRYAIQLISTAGLVCRKRRGTEVQVEDIKRVYSLFLDEARSSQYMKEYQDSFLFNETQTSQMDTS.

77–84 (GQPGTGKT) contacts ATP.

The protein belongs to the RuvB family. In terms of assembly, forms homohexameric rings. Can form a dodecamer with ruvbl1 made of two stacked hexameric rings. Component of the chromatin-remodeling Ino80 complex. Component of some MLL1/MLL complex.

It localises to the nucleus. It is found in the dynein axonemal particle. It catalyses the reaction ATP + H2O = ADP + phosphate + H(+). Functionally, has double-stranded DNA-stimulated ATPase activity. Has ATP-dependent DNA helicase (5' to 3') activity suggesting a role in nuclear processes such as recombination and transcription. Represses gene activation mediated by beta-catenin. Proposed core component of the chromatin remodeling Ino80 complex which exhibits DNA- and nucleosome-activated ATPase activity and catalyzes ATP-dependent nucleosome sliding. Involved in the endoplasmic reticulum (ER)-associated degradation (ERAD) pathway where it negatively regulates expression of ER stress response genes. May act as a regulator of embryonic heart growth. This Danio rerio (Zebrafish) protein is RuvB-like 2 (ruvbl2).